The sequence spans 129 residues: Histone H2A-III (129 aa).

The segment at 1–22 is disordered; it reads MSGRGKQGGKARAKAKSRSSRA. The residue at position 2 (Ser2) is an N-acetylserine. Phosphoserine is present on Ser2. An N6-(2-hydroxyisobutyryl)lysine modification is found at Lys6. N6-acetyllysine is present on residues Lys6 and Lys10. Over residues 7 to 19 the composition is skewed to basic residues; that stretch reads QGGKARAKAKSRS. An N6-(2-hydroxyisobutyryl)lysine; alternate modification is found at Lys10. Lys10 carries the post-translational modification N6-lactoyllysine; alternate. Lys10 is subject to N6-succinyllysine. Glycyl lysine isopeptide (Lys-Gly) (interchain with G-Cter in ubiquitin) cross-links involve residues Lys14 and Lys16. Lys37 carries the post-translational modification N6-(2-hydroxyisobutyryl)lysine; alternate. N6-(2-hydroxyisobutyryl)lysine is present on residues Lys75 and Lys76. Residue Lys96 is modified to N6-(2-hydroxyisobutyryl)lysine; alternate. Lys96 is subject to N6-succinyllysine. At Lys96 the chain carries N6-glutaryllysine; alternate. At Lys100 the chain carries N6-glutaryllysine. Gln105 bears the N5-methylglutamine mark. The residue at position 119 (Lys119) is an N6-(2-hydroxyisobutyryl)lysine; alternate. Residues Lys119 and Lys120 each carry the N6-glutaryllysine; alternate modification. Residue Lys120 forms a Glycyl lysine isopeptide (Lys-Gly) (interchain with G-Cter in ubiquitin) linkage.

It belongs to the histone H2A family. In terms of assembly, the nucleosome is a histone octamer containing two molecules each of H2A, H2B, H3 and H4 assembled in one H3-H4 heterotetramer and two H2A-H2B heterodimers. The octamer wraps approximately 147 bp of DNA. In terms of processing, monoubiquitination of Lys-120 (H2AK119Ub) gives a specific tag for epigenetic transcriptional repression. Following DNA double-strand breaks (DSBs), it is ubiquitinated through 'Lys-63' linkage of ubiquitin moieties, leading to the recruitment of repair proteins to sites of DNA damage. H2AK119Ub and ionizing radiation-induced 'Lys-63'-linked ubiquitination are distinct events. Phosphorylation on Ser-2 is enhanced during mitosis. Phosphorylation on Ser-2 directly represses transcription. Post-translationally, glutamine methylation at Gln-105 (H2AQ104me) by FBL is specifically dedicated to polymerase I. It is present at 35S ribosomal DNA locus and impairs binding of the FACT complex.

The protein localises to the nucleus. The protein resides in the chromosome. Functionally, core component of nucleosome. Nucleosomes wrap and compact DNA into chromatin, limiting DNA accessibility to the cellular machineries which require DNA as a template. Histones thereby play a central role in transcription regulation, DNA repair, DNA replication and chromosomal stability. DNA accessibility is regulated via a complex set of post-translational modifications of histones, also called histone code, and nucleosome remodeling. This is Histone H2A-III from Gallus gallus (Chicken).